Reading from the N-terminus, the 144-residue chain is Large ribosomal subunit protein uL16m (144 aa).

It belongs to the universal ribosomal protein uL16 family.

It localises to the mitochondrion. The chain is Large ribosomal subunit protein uL16m (mrpl16) from Dictyostelium discoideum (Social amoeba).